The following is a 145-amino-acid chain: I-leader protein (145 aa).

The protein belongs to the adenoviridae leader protein family.

The protein localises to the host cytoplasm. The protein resides in the host perinuclear region. The polypeptide is I-leader protein (Human adenovirus C serotype 5 (HAdV-5)).